We begin with the raw amino-acid sequence, 418 residues long: Replication factor C large subunit (418 aa).

47 to 54 (GSQGTGKT) is a binding site for ATP.

The protein belongs to the activator 1 small subunits family. RfcL subfamily. In terms of assembly, heteromultimer composed of small subunits (RfcS) and large subunits (RfcL).

In terms of biological role, part of the RFC clamp loader complex which loads the PCNA sliding clamp onto DNA. This is Replication factor C large subunit from Thermoplasma acidophilum (strain ATCC 25905 / DSM 1728 / JCM 9062 / NBRC 15155 / AMRC-C165).